A 230-amino-acid polypeptide reads, in one-letter code: Ureidoacrylate amidohydrolase RutB (230 aa).

The active-site Proton acceptor is Asp-24. The active site involves Lys-133. Cys-166 (nucleophile) is an active-site residue.

The protein belongs to the isochorismatase family. RutB subfamily.

It carries out the reaction (Z)-3-ureidoacrylate + H2O + H(+) = (Z)-3-aminoacrylate + NH4(+) + CO2. It catalyses the reaction (Z)-3-ureidoacrylate + H2O = (Z)-3-aminoacrylate + carbamate + H(+). The enzyme catalyses (Z)-2-methylureidoacrylate + H2O + H(+) = (Z)-2-methylaminoacrylate + NH4(+) + CO2. In terms of biological role, hydrolyzes ureidoacrylate to form aminoacrylate and carbamate. The carbamate hydrolyzes spontaneously, thereby releasing one of the nitrogen atoms of the pyrimidine ring as ammonia and one of its carbon atoms as CO2. The sequence is that of Ureidoacrylate amidohydrolase RutB from Escherichia coli O81 (strain ED1a).